The chain runs to 73 residues: Putative antitoxin VapB18 (73 aa).

Belongs to the UPF0330 family.

Its function is as follows. Possibly the antitoxin component of a type II toxin-antitoxin (TA) system. Its cognate toxin is VapC18 (Potential). The polypeptide is Putative antitoxin VapB18 (vapB18) (Archaeoglobus fulgidus (strain ATCC 49558 / DSM 4304 / JCM 9628 / NBRC 100126 / VC-16)).